The chain runs to 92 residues: Small ribosomal subunit protein uS19 (92 aa).

This sequence belongs to the universal ribosomal protein uS19 family.

Protein S19 forms a complex with S13 that binds strongly to the 16S ribosomal RNA. This chain is Small ribosomal subunit protein uS19, found in Leuconostoc mesenteroides subsp. mesenteroides (strain ATCC 8293 / DSM 20343 / BCRC 11652 / CCM 1803 / JCM 6124 / NCDO 523 / NBRC 100496 / NCIMB 8023 / NCTC 12954 / NRRL B-1118 / 37Y).